A 21-amino-acid polypeptide reads, in one-letter code: Phospholipase A2 crotoxin basic chain (21 aa).

The protein belongs to the phospholipase A2 family. Group II subfamily. Ca(2+) serves as cofactor. Expressed by the venom gland.

The protein localises to the secreted. The enzyme catalyses a 1,2-diacyl-sn-glycero-3-phosphocholine + H2O = a 1-acyl-sn-glycero-3-phosphocholine + a fatty acid + H(+). Its function is as follows. Snake venom phospholipase A2 (PLA2) that induces a conspicuous local myotoxic effect and moderate footpad edema. In vitro, it shows anticoagulant effects and is not cytotoxic on myoblast but is able to lyse myotubes. PLA2 catalyzes the calcium-dependent hydrolysis of the 2-acyl groups in 3-sn-phosphoglycerides. This is Phospholipase A2 crotoxin basic chain from Crotalus durissus cumanensis (South American rattlesnake).